The following is a 204-amino-acid chain: Large ribosomal subunit protein eL15 (204 aa).

The protein belongs to the eukaryotic ribosomal protein eL15 family. As to quaternary structure, component of the large ribosomal subunit.

Its subcellular location is the cytoplasm. Its function is as follows. Component of the large ribosomal subunit. The ribosome is a large ribonucleoprotein complex responsible for the synthesis of proteins in the cell. This is Large ribosomal subunit protein eL15 (rpl15) from Monopterus albus (Swamp eel).